The chain runs to 225 residues: ATP phosphoribosyltransferase (225 aa).

This sequence belongs to the ATP phosphoribosyltransferase family. Short subfamily. Heteromultimer composed of HisG and HisZ subunits.

It localises to the cytoplasm. It carries out the reaction 1-(5-phospho-beta-D-ribosyl)-ATP + diphosphate = 5-phospho-alpha-D-ribose 1-diphosphate + ATP. It participates in amino-acid biosynthesis; L-histidine biosynthesis; L-histidine from 5-phospho-alpha-D-ribose 1-diphosphate: step 1/9. Functionally, catalyzes the condensation of ATP and 5-phosphoribose 1-diphosphate to form N'-(5'-phosphoribosyl)-ATP (PR-ATP). Has a crucial role in the pathway because the rate of histidine biosynthesis seems to be controlled primarily by regulation of HisG enzymatic activity. The sequence is that of ATP phosphoribosyltransferase from Herminiimonas arsenicoxydans.